A 591-amino-acid polypeptide reads, in one-letter code: L-fucose isomerase (591 aa).

Catalysis depends on proton acceptor residues glutamate 337 and aspartate 361. 3 residues coordinate Mn(2+): glutamate 337, aspartate 361, and histidine 528.

This sequence belongs to the L-fucose isomerase family. In terms of assembly, homohexamer. Requires Mn(2+) as cofactor.

It localises to the cytoplasm. It catalyses the reaction L-fucose = L-fuculose. Its pathway is carbohydrate degradation; L-fucose degradation; L-lactaldehyde and glycerone phosphate from L-fucose: step 1/3. In terms of biological role, converts the aldose L-fucose into the corresponding ketose L-fuculose. The chain is L-fucose isomerase from Shigella dysenteriae serotype 1 (strain Sd197).